The chain runs to 431 residues: ETS domain-containing protein Elk-4 (431 aa).

A DNA-binding region (ETS) is located at residues 5–85 (ITLWQFLLQL…NGQKFVYKFV (81 aa)). A disordered region spans residues 114–139 (SSSSKDVENGGKDKPPQPGAKTSSRN). The span at 118–128 (KDVENGGKDKP) shows a compositional bias: basic and acidic residues. K167 participates in a covalent cross-link: Glycyl lysine isopeptide (Lys-Gly) (interchain with G-Cter in SUMO2). The residue at position 180 (S180) is a Phosphoserine. 3 disordered regions span residues 251–282 (TTPP…DTDI), 294–323 (ENLS…KKPK), and 411–431 (TLSG…LQKT). Pro residues predominate over residues 261-273 (LQEPPRTPSPPLS). Over residues 299-313 (EPKDQDSVLLEKDKV) the composition is skewed to basic and acidic residues.

It belongs to the ETS family. In terms of assembly, interacts with SIRT7.

The protein localises to the nucleus. Involved in both transcriptional activation and repression. Interaction with SIRT7 leads to recruitment and stabilization of SIRT7 at promoters, followed by deacetylation of histone H3 at 'Lys-18' (H3K18Ac) and subsequent transcription repression. Forms a ternary complex with the serum response factor (SRF). Requires DNA-bound SRF for ternary complex formation and makes extensive DNA contacts to the 5'side of SRF, but does not bind DNA autonomously. This is ETS domain-containing protein Elk-4 (ELK4) from Homo sapiens (Human).